We begin with the raw amino-acid sequence, 28 residues long: SLANFLSMTLTAAKRKPKEYDGYGNYCG.

Gly-28 is a binding site for Ca(2+).

The cofactor is Ca(2+). Expressed by the venom gland.

It localises to the secreted. The enzyme catalyses a 1,2-diacyl-sn-glycero-3-phosphocholine + H2O = a 1-acyl-sn-glycero-3-phosphocholine + a fatty acid + H(+). Functionally, PLA2 catalyzes the calcium-dependent hydrolysis of the 2-acyl groups in 3-sn-phosphoglycerides. This is Phospholipase A2 from Scolopendra dehaani (Thai centipede).